We begin with the raw amino-acid sequence, 208 residues long: Small ribosomal subunit protein uS9c (208 aa).

Residues 1-51 (MAVSISSLTSSFASLSFTSNLTPKPQTLPMARTKPFSLSNPAVVKPLVITA) constitute a chloroplast transit peptide. The residue at position 52 (T52) is an N-acetylthreonine. The segment at 185-208 (DSRIVERKKPGLKKARKAPQFSKR) is disordered. A compositionally biased stretch (basic residues) spans 194–208 (PGLKKARKAPQFSKR).

In terms of assembly, component of the chloroplast small ribosomal subunit (SSU). Mature 70S chloroplast ribosomes of higher plants consist of a small (30S) and a large (50S) subunit. The 30S small subunit contains 1 molecule of ribosomal RNA (16S rRNA) and 24 different proteins. The 50S large subunit contains 3 rRNA molecules (23S, 5S and 4.5S rRNA) and 33 different proteins. uS9c binds directly to 16S ribosomal RNA. uS9c interacts with translation factor pY (PSRP1).

It is found in the plastid. It localises to the chloroplast. In terms of biological role, component of the chloroplast ribosome (chloro-ribosome), a dedicated translation machinery responsible for the synthesis of chloroplast genome-encoded proteins, including proteins of the transcription and translation machinery and components of the photosynthetic apparatus. The sequence is that of Small ribosomal subunit protein uS9c (PRPS9) from Spinacia oleracea (Spinach).